The primary structure comprises 265 residues: Apolipoprotein A-I (265 aa).

A signal peptide spans 1–18 (MKAVVLTLAVLFLTGSQA). Repeat copies occupy residues 67 to 88 (LKLV…EHLG) and 89 to 110 (PVAQ…REIN). Residues 67-265 (LKLVDNWDTL…IDEAAKKLTA (199 aa)) form a 10 X approximate tandem repeats region. A 3; half-length repeat occupies 111–121 (KDLEDVRQKTQ). Repeat copies occupy residues 122–143 (PFLD…QKVE), 144–165 (PLSA…EQVT), 166–187 (PLGE…TQLA), 188–209 (PYSE…EGGS), and 210–231 (ASLA…EKAK). Residue Met-193 is modified to Methionine sulfoxide. The stretch at 232–242 (PVLEDIHQGLM) is one 9; half-length repeat. Methionine sulfoxide is present on residues Met-242 and Met-244. Repeat unit 10 spans residues 243–265 (PMWESFKTGVLNVIDEAAKKLTA).

The protein belongs to the apolipoprotein A1/A4/E family. Homodimer. Interacts with APOA1BP and CLU. Component of a sperm activating protein complex (SPAP), consisting of APOA1, an immunoglobulin heavy chain, an immunoglobulin light chain and albumin. Interacts with NDRG1. Interacts with SCGB3A2. Interacts with NAXE and YJEFN3. In terms of processing, glycosylated. Palmitoylated. Post-translationally, phosphorylation sites are present in the extracellular medium. As to expression, major protein of plasma HDL, also found in chylomicrons.

The protein localises to the secreted. Its function is as follows. Participates in the reverse transport of cholesterol from tissues to the liver for excretion by promoting cholesterol efflux from tissues and by acting as a cofactor for the lecithin cholesterol acyltransferase (LCAT). As part of the SPAP complex, activates spermatozoa motility. In Tupaia belangeri (Common tree shrew), this protein is Apolipoprotein A-I (APOA1).